Reading from the N-terminus, the 439-residue chain is MTTVDIGRYKRLVQYFWDPEPTNNIASKSPIWCLGEEYLVSDKSSPSAVTESPPKEGGYLLAQSLSTTETTTPPDSTVGSLESSSEYDNCDTASTDGGWPTAFLDDFEAKIWLTYRSNFPAIAKSQDPKALSAMSLSVRLRSQLVDQGGFTSDTGWGCMIRSGQSLLANALLTLRMGREWRRGSSSNEERKILSLFADDPRAPYSIHKFVEHGASACGKHPGEWFGPSAAARCIQALTNSQVESELRVYITGDGSDVYEDTFMSIAKPNSTKFTPTLILVGTRLGLDKITPVYWEALKSSLQMPQSVGIAGGRPSSSHYFIGVQESDFFYLDPHQTRPALPFNDNVEDYTPEDIDSCHTRRLRRLHIKEMDPSMLIAFLIRDENDWKDWRRAVREVQGKGVIHVADRDPALHGLGAERDGAIDEVETFDDDDDDTVLNG.

Residues 65–91 form a disordered region; sequence LSTTETTTPPDSTVGSLESSSEYDNCD. The span at 66 to 77 shows a compositional bias: low complexity; sequence STTETTTPPDST. A compositionally biased stretch (polar residues) spans 78–91; it reads VGSLESSSEYDNCD. C158 acts as the Nucleophile in catalysis. Catalysis depends on residues D332 and H334.

It belongs to the peptidase C54 family.

Its subcellular location is the cytoplasm. The protein localises to the nucleus. It is found in the preautophagosomal structure. It carries out the reaction [protein]-C-terminal L-amino acid-glycyl-phosphatidylethanolamide + H2O = [protein]-C-terminal L-amino acid-glycine + a 1,2-diacyl-sn-glycero-3-phosphoethanolamine. In terms of biological role, cysteine protease that plays a key role in cytoplasm to vacuole transport (Cvt) and autophagy by mediating both proteolytic activation and delipidation of ATG8. Required for selective autophagic degradation of the nucleus (nucleophagy) as well as for mitophagy which contributes to regulate mitochondrial quantity and quality by eliminating the mitochondria to a basal level to fulfill cellular energy requirements and preventing excess ROS production. The protease activity is required for proteolytic activation of ATG8: cleaves the C-terminal amino acid of ATG8 to reveal a C-terminal glycine. ATG8 ubiquitin-like activity requires the exposure of the glycine at the C-terminus for its conjugation to phosphatidylethanolamine (PE) and its insertion to membranes, which is necessary for autophagy. The ATG8-PE conjugate mediates tethering between adjacent membranes and stimulates membrane hemifusion, leading to expansion of the autophagosomal membrane during autophagy. In addition to the protease activity, also catalyzes deconjugation of PE-conjugated forms of ATG8 during macroautophagy: ATG8 delipidation is required to release the protein from membranes, which facilitates multiple events during macroautophagy, and especially for efficient autophagosome biogenesis, the assembly of ATG9-containing tubulovesicular clusters into phagophores/autophagosomes, and for the disassembly of PAS-associated ATG components. ATG8 delipidation by ATG4 also recycles ATG8-PE generated on inappropriate membranes to maintain a reservoir of unlipidated ATG8 that is required for autophagosome formation at the PAS. The polypeptide is Probable cysteine protease atg4 (atg4) (Sclerotinia sclerotiorum (strain ATCC 18683 / 1980 / Ss-1) (White mold)).